Reading from the N-terminus, the 648-residue chain is Macrolide export ATP-binding/permease protein MacB 1 (648 aa).

Residues 6–244 form the ABC transporter domain; that stretch reads LQLSGIRRHF…PAPTTSRADT (239 aa). 42–49 is a binding site for ATP; the sequence is GASGSGKS. Residues 222–248 are disordered; it reads VVADRRREPTPPSPAPTTSRADTGGRG. The next 4 helical transmembrane spans lie at 273-293, 521-541, 578-598, and 613-633; these read FLTMLGIIIGIAAVVSVVALG, LTLLIAMIALISLVVGGIGVM, LVCLLGGAAGVLLSLLIGVLF, and AVLMAFFCSSLIGVLFGFFPA.

This sequence belongs to the ABC transporter superfamily. Macrolide exporter (TC 3.A.1.122) family. As to quaternary structure, homodimer. Part of the tripartite efflux system MacAB-TolC, which is composed of an inner membrane transporter, MacB, a periplasmic membrane fusion protein, MacA, and an outer membrane component, TolC. The complex forms a large protein conduit and can translocate molecules across both the inner and outer membranes. Interacts with MacA.

It is found in the cell inner membrane. Functionally, part of the tripartite efflux system MacAB-TolC. MacB is a non-canonical ABC transporter that contains transmembrane domains (TMD), which form a pore in the inner membrane, and an ATP-binding domain (NBD), which is responsible for energy generation. Confers resistance against macrolides. This is Macrolide export ATP-binding/permease protein MacB 1 from Aeromonas hydrophila subsp. hydrophila (strain ATCC 7966 / DSM 30187 / BCRC 13018 / CCUG 14551 / JCM 1027 / KCTC 2358 / NCIMB 9240 / NCTC 8049).